A 450-amino-acid polypeptide reads, in one-letter code: Growth/differentiation factor 7 (450 aa).

An N-terminal signal peptide occupies residues 1 to 19 (MDLSAAAALCLWLLSACRP). Residues 20–321 (RDGLEAAAVL…AVIGGRRRRR (302 aa)) constitute a propeptide that is removed on maturation. The N-linked (GlcNAc...) asparagine glycan is linked to Asn-83. The segment at 296 to 349 (ASEPLPDPGTGTASPRAVIGGRRRRRTALAGTRTAQGSGGGAGRGHGRRGRSRC) is disordered. Basic residues predominate over residues 340 to 349 (GHGRRGRSRC). 3 cysteine pairs are disulfide-bonded: Cys-349–Cys-415, Cys-378–Cys-447, and Cys-382–Cys-449.

This sequence belongs to the TGF-beta family. Homodimer; disulfide-linked.

It is found in the secreted. Functionally, may play an active role in the motor area of the primate neocortex. In Homo sapiens (Human), this protein is Growth/differentiation factor 7 (GDF7).